We begin with the raw amino-acid sequence, 411 residues long: LL-diaminopimelate aminotransferase (411 aa).

Y15 and G42 together coordinate substrate. Residues Y72, S108–K109, Y132, N187, Y218, and S246–S248 contribute to the pyridoxal 5'-phosphate site. 3 residues coordinate substrate: K109, Y132, and N187. K249 bears the N6-(pyridoxal phosphate)lysine mark. Positions 257 and 292 each coordinate pyridoxal 5'-phosphate. Substrate-binding residues include N292 and R388.

Belongs to the class-I pyridoxal-phosphate-dependent aminotransferase family. LL-diaminopimelate aminotransferase subfamily. Homodimer. The cofactor is pyridoxal 5'-phosphate.

The catalysed reaction is (2S,6S)-2,6-diaminopimelate + 2-oxoglutarate = (S)-2,3,4,5-tetrahydrodipicolinate + L-glutamate + H2O + H(+). The protein operates within amino-acid biosynthesis; L-lysine biosynthesis via DAP pathway; LL-2,6-diaminopimelate from (S)-tetrahydrodipicolinate (aminotransferase route): step 1/1. Involved in the synthesis of meso-diaminopimelate (m-DAP or DL-DAP), required for both lysine and peptidoglycan biosynthesis. Catalyzes the direct conversion of tetrahydrodipicolinate to LL-diaminopimelate. This Nostoc punctiforme (strain ATCC 29133 / PCC 73102) protein is LL-diaminopimelate aminotransferase.